Here is a 113-residue protein sequence, read N- to C-terminus: Protein AV2 (113 aa).

Residues 94–113 are disordered; sequence SKTGLGEQAHVQKAHDVQDV.

Belongs to the geminiviridae protein AV2/V2 family. In terms of assembly, interacts with host SGS3.

The protein localises to the host cytoplasm. The protein resides in the host perinuclear region. In terms of biological role, through its interaction with host SGS3, acts as a suppressor of RNA-mediated gene silencing, also known as post-transcriptional gene silencing (PTGS), a mechanism of plant viral defense that limits the accumulation of viral RNAs. The sequence is that of Protein AV2 from African cassava mosaic virus (isolate West Kenyan 844) (ACMV).